The sequence spans 65 residues: Conotoxin Bu19 (65 aa).

Positions 1–21 (MGMRMVFTVFLLVVLATTVVS) are cleaved as a signal peptide. Residues 22-48 (FTSDRASDGRNAAANDKASDLAALAVR) constitute a propeptide that is removed on maturation. 2 cysteine pairs are disulfide-bonded: Cys-50/Cys-56 and Cys-51/Cys-64. Cys-64 is subject to Cysteine amide.

It belongs to the conotoxin A superfamily. As to expression, expressed by the venom duct.

Its subcellular location is the secreted. This chain is Conotoxin Bu19, found in Conus bullatus (Bubble cone).